The following is a 126-amino-acid chain: Protein translocase subunit SecE (126 aa).

3 consecutive transmembrane segments (helical) span residues 20-40 (WLAAFVLAAAAVVGNYLYGEM), 42-62 (VVVRAAGVVVLIAAALGVAAT), and 97-117 (IVLAVSIVMALVLWGIDGIMV).

Belongs to the SecE/SEC61-gamma family. As to quaternary structure, component of the Sec protein translocase complex. Heterotrimer consisting of SecY, SecE and SecG subunits. The heterotrimers can form oligomers, although 1 heterotrimer is thought to be able to translocate proteins. Interacts with the ribosome. Interacts with SecDF, and other proteins may be involved. Interacts with SecA.

It localises to the cell inner membrane. In terms of biological role, essential subunit of the Sec protein translocation channel SecYEG. Clamps together the 2 halves of SecY. May contact the channel plug during translocation. The protein is Protein translocase subunit SecE of Vibrio alginolyticus.